Consider the following 439-residue polypeptide: Methionine aminopeptidase 2-2 (439 aa).

The disordered stretch occupies residues 1 to 90; that stretch reads MAAQAPPTDE…SQLFPDKQYP (90 aa). Over residues 10–23 the composition is skewed to basic and acidic residues; the sequence is ELSKLSVEDADNKP. Over residues 35–45 the composition is skewed to acidic residues; that stretch reads DEDDSEDDAED. A compositionally biased stretch (basic residues) spans 54-68; the sequence is AKKKKKRKPRKKKKN. Residue His-192 participates in substrate binding. 3 residues coordinate a divalent metal cation: Asp-212, Asp-223, and His-292. Residue His-300 participates in substrate binding. 2 residues coordinate a divalent metal cation: Glu-325 and Glu-420.

It belongs to the peptidase M24A family. Methionine aminopeptidase eukaryotic type 2 subfamily. Co(2+) is required as a cofactor. The cofactor is Zn(2+). Mn(2+) serves as cofactor. It depends on Fe(2+) as a cofactor.

It localises to the cytoplasm. The catalysed reaction is Release of N-terminal amino acids, preferentially methionine, from peptides and arylamides.. Cotranslationally removes the N-terminal methionine from nascent proteins. The N-terminal methionine is often cleaved when the second residue in the primary sequence is small and uncharged (Met-Ala-, Cys, Gly, Pro, Ser, Thr, or Val). The sequence is that of Methionine aminopeptidase 2-2 from Chaetomium globosum (strain ATCC 6205 / CBS 148.51 / DSM 1962 / NBRC 6347 / NRRL 1970) (Soil fungus).